Consider the following 375-residue polypeptide: Succinyl-diaminopimelate desuccinylase (375 aa).

His66 contributes to the Zn(2+) binding site. The active site involves Asp68. Asp99 contacts Zn(2+). Glu133 (proton acceptor) is an active-site residue. Residues Glu134, Glu162, and His348 each contribute to the Zn(2+) site.

Belongs to the peptidase M20A family. DapE subfamily. In terms of assembly, homodimer. The cofactor is Zn(2+). Co(2+) is required as a cofactor.

It catalyses the reaction N-succinyl-(2S,6S)-2,6-diaminopimelate + H2O = (2S,6S)-2,6-diaminopimelate + succinate. It functions in the pathway amino-acid biosynthesis; L-lysine biosynthesis via DAP pathway; LL-2,6-diaminopimelate from (S)-tetrahydrodipicolinate (succinylase route): step 3/3. Its function is as follows. Catalyzes the hydrolysis of N-succinyl-L,L-diaminopimelic acid (SDAP), forming succinate and LL-2,6-diaminopimelate (DAP), an intermediate involved in the bacterial biosynthesis of lysine and meso-diaminopimelic acid, an essential component of bacterial cell walls. The polypeptide is Succinyl-diaminopimelate desuccinylase (Alkalilimnicola ehrlichii (strain ATCC BAA-1101 / DSM 17681 / MLHE-1)).